The sequence spans 254 residues: 21S rRNA pseudouridine(2819) synthase (254 aa).

Asp-71 is an active-site residue.

The protein belongs to the pseudouridine synthase RluA family.

Its subcellular location is the mitochondrion. It catalyses the reaction uridine(2819) in 21S rRNA = pseudouridine(2819) in 21S rRNA. Its function is as follows. Pseudouridylate synthase responsible for the pseudouridine-2819 formation in mitochondrial 21S rRNA. May modulate the efficiency or the fidelity of the mitochondrial translation machinery. This is 21S rRNA pseudouridine(2819) synthase (PUS5) from Saccharomyces cerevisiae (strain ATCC 204508 / S288c) (Baker's yeast).